A 187-amino-acid polypeptide reads, in one-letter code: Alpha-D-galactose-binding lectin (187 aa).

The signal sequence occupies residues 1-37 (MTFAKQSCFNSIILLSIATSYFKIGHKISELGNRIEK). Position 39 is an N-acetylthreonine (Thr-39). N-acetyl-alpha-D-galactosamine is bound by residues 53–56 (HPKG), Asp-64, 72–76 (DIHER), His-101, Gly-104, Glu-112, 120–122 (DRH), His-145, Gly-148, Glu-156, and 164–166 (DKH).

As to quaternary structure, homodimer. Highest expression in the posterior part of the mantle. Highly expressed in gills and to a lesser extent in mid mantle and anterior muscle. Lowest expression in digestive gland and posterior adductor muscle. Scarcely detectable in hemocytes.

Its activity is regulated as follows. Agglutination of E.coli is inhibited by alpha-galactoside melibiose, but not by beta-galactoside lactose. In terms of biological role, alpha-D-galactose-binding lectin. Binds D-GalNAc, but not glucose or its derivatives. Has hemagglutinating activity towards rabbit erythrocytes. Agglutinates bacteria. Has bacteriostatic activity on both Gram-positive and Gram-negative bacteria including B.subtilis, S.aureus, E.coli and V.parahaemolyticus, respectively. Has a dose-dependent cytotoxic effect on the human globotriaosylceramide (Gb3)-expressing Epstein-Barr virus (EBV)-positive Burkitt's lymphoma (Raji) cell line. Has dose-dependent cytotoxic effect on another Burkitt's lymphoma (Ramos) cell line, which does not possess the EBV genome, but also expresses Gb3. Binds to Gb3 in these cells leading to phosphorylation of MEK1/2, ERK1/2, JNK and p38 kinase, activation of caspase-9/3 and to expression of p21 and tumor necrosis factor (TNF)-alpha. No cytotoxic effect on the human chronic myelogenous leukemia (K-562) cell line, which does not express Gb3. May be involved in innate immunity acting as an antibacterial or antifungal agent. May be a pattern recognition receptor (PRR) involved in recognition of glycans found on parasitic or symbiotic microorganisms. This is Alpha-D-galactose-binding lectin from Mytilus galloprovincialis (Mediterranean mussel).